The primary structure comprises 561 residues: Urocanate hydratase (561 aa).

NAD(+) is bound by residues 52–53 (GG), Q130, 176–178 (GMG), E196, R201, 242–243 (NA), 263–267 (QTSAH), 273–274 (YL), and Y322. C410 is a catalytic residue. G492 provides a ligand contact to NAD(+).

It belongs to the urocanase family. The cofactor is NAD(+).

The protein localises to the cytoplasm. It carries out the reaction 4-imidazolone-5-propanoate = trans-urocanate + H2O. Its pathway is amino-acid degradation; L-histidine degradation into L-glutamate; N-formimidoyl-L-glutamate from L-histidine: step 2/3. In terms of biological role, catalyzes the conversion of urocanate to 4-imidazolone-5-propionate. In Salmonella newport (strain SL254), this protein is Urocanate hydratase.